A 357-amino-acid polypeptide reads, in one-letter code: Protein RecA (357 aa).

78-85 (GPESSGKT) lines the ATP pocket.

This sequence belongs to the RecA family.

It is found in the cytoplasm. Functionally, can catalyze the hydrolysis of ATP in the presence of single-stranded DNA, the ATP-dependent uptake of single-stranded DNA by duplex DNA, and the ATP-dependent hybridization of homologous single-stranded DNAs. It interacts with LexA causing its activation and leading to its autocatalytic cleavage. This Cereibacter sphaeroides (strain ATCC 17029 / ATH 2.4.9) (Rhodobacter sphaeroides) protein is Protein RecA.